The primary structure comprises 750 residues: E3 ubiquitin-protein ligase rfwd3.S (750 aa).

The interval 92–206 is disordered; it reads RQAAEQRSSV…GAAPPAEPAP (115 aa). Over residues 105–116 the composition is skewed to basic residues; it reads RVQRRSTRRHQR. Residues 122–144 are compositionally biased toward polar residues; it reads TAGTSSRAALSNFFQINRTQGVA. Over residues 168 to 181 the composition is skewed to acidic residues; it reads SSDETVELSEEEEG. An RING-type; degenerate zinc finger spans residues 263–307; that stretch reads CAICFEPWTNAGQHRLSALRCGHLFGFTCIERWLKGGAAKCPQCN. Over residues 387–405 the composition is skewed to low complexity; sequence TSMQASSSRSTISGSLSSS. The interval 387 to 406 is disordered; sequence TSMQASSSRSTISGSLSSSQ. WD repeat units lie at residues 470 to 510, 512 to 552, and 558 to 603; these read IHSK…VVQT, NTGR…NCVQ, and GSRC…YRPH.

[4Fe-4S] cluster is required as a cofactor.

The protein localises to the nucleus. It localises to the PML body. Its subcellular location is the cytoplasm. The enzyme catalyses S-ubiquitinyl-[E2 ubiquitin-conjugating enzyme]-L-cysteine + [acceptor protein]-L-lysine = [E2 ubiquitin-conjugating enzyme]-L-cysteine + N(6)-ubiquitinyl-[acceptor protein]-L-lysine.. It functions in the pathway protein modification; protein ubiquitination. Functionally, E3 ubiquitin-protein ligase required for the repair of DNA interstrand cross-links (ICL) in response to DNA damage. Plays a key role in RPA-mediated DNA damage signaling and repair. Required to translesion DNA synthesis across DNA-protein cross-link adducts by catalyzing ubiquitination of proteins on single-stranded DNA (ssDNA). Mediates ubiquitination of the hmces DNA-protein cross-link, possibly promoting its degradation. This is E3 ubiquitin-protein ligase rfwd3.S (rfwd3.S) from Xenopus laevis (African clawed frog).